Here is a 236-residue protein sequence, read N- to C-terminus: UPF0502 protein Bamb_4889 (236 aa).

It belongs to the UPF0502 family.

The polypeptide is UPF0502 protein Bamb_4889 (Burkholderia ambifaria (strain ATCC BAA-244 / DSM 16087 / CCUG 44356 / LMG 19182 / AMMD) (Burkholderia cepacia (strain AMMD))).